We begin with the raw amino-acid sequence, 164 residues long: Thiol peroxidase (164 aa).

Positions 18-163 constitute a Thioredoxin domain; that stretch reads VNEGDIAPNF…FEAALKAYRN (146 aa). The active-site Cysteine sulfenic acid (-SOH) intermediate is the C60. An intrachain disulfide couples C60 to C93.

The protein belongs to the peroxiredoxin family. Tpx subfamily. In terms of assembly, homodimer.

It carries out the reaction a hydroperoxide + [thioredoxin]-dithiol = an alcohol + [thioredoxin]-disulfide + H2O. Its function is as follows. Thiol-specific peroxidase that catalyzes the reduction of hydrogen peroxide and organic hydroperoxides to water and alcohols, respectively. Plays a role in cell protection against oxidative stress by detoxifying peroxides. The protein is Thiol peroxidase of Staphylococcus epidermidis (strain ATCC 35984 / DSM 28319 / BCRC 17069 / CCUG 31568 / BM 3577 / RP62A).